The following is a 159-amino-acid chain: Aspartate carbamoyltransferase regulatory chain (159 aa).

Residues Cys-111, Cys-116, Cys-141, and Cys-144 each contribute to the Zn(2+) site.

The protein belongs to the PyrI family. Contains catalytic and regulatory chains. Zn(2+) is required as a cofactor.

In terms of biological role, involved in allosteric regulation of aspartate carbamoyltransferase. The sequence is that of Aspartate carbamoyltransferase regulatory chain from Aeropyrum pernix (strain ATCC 700893 / DSM 11879 / JCM 9820 / NBRC 100138 / K1).